The following is a 161-amino-acid chain: uncharacterized protein (161 aa).

This is an uncharacterized protein from Rickettsia conorii (strain ATCC VR-613 / Malish 7).